The sequence spans 298 residues: Protoheme IX farnesyltransferase (298 aa).

The next 8 membrane-spanning stretches (helical) occupy residues 24-44 (VVSL…PAWP), 46-66 (WTTI…AAAF), 97-117 (LVFA…VVNP), 118-138 (LTMW…TVLL), 146-166 (IVIG…AATG), 172-192 (ALLL…ALAL), 231-251 (LLPV…VLLG), and 278-298 (IWYL…PIPV).

This sequence belongs to the UbiA prenyltransferase family. Protoheme IX farnesyltransferase subfamily.

It is found in the cell inner membrane. It carries out the reaction heme b + (2E,6E)-farnesyl diphosphate + H2O = Fe(II)-heme o + diphosphate. It participates in porphyrin-containing compound metabolism; heme O biosynthesis; heme O from protoheme: step 1/1. In terms of biological role, converts heme B (protoheme IX) to heme O by substitution of the vinyl group on carbon 2 of heme B porphyrin ring with a hydroxyethyl farnesyl side group. This Thiobacillus denitrificans (strain ATCC 25259 / T1) protein is Protoheme IX farnesyltransferase.